A 79-amino-acid polypeptide reads, in one-letter code: RNA-binding protein Hfq (79 aa).

In terms of domain architecture, Sm spans 10–70 (DVFLNTVRKQ…ISTIMPGQPV (61 aa)).

The protein belongs to the Hfq family. In terms of assembly, homohexamer.

In terms of biological role, RNA chaperone that binds small regulatory RNA (sRNAs) and mRNAs to facilitate mRNA translational regulation in response to envelope stress, environmental stress and changes in metabolite concentrations. Also binds with high specificity to tRNAs. In Bartonella quintana (strain Toulouse) (Rochalimaea quintana), this protein is RNA-binding protein Hfq.